The following is a 710-amino-acid chain: Probable threonine--tRNA ligase 1, cytoplasmic (710 aa).

Residues 1–35 (MSDSQENKPVETPTEVKPVAEKKPAAEKKEKKPAV) form a disordered region. The span at 18 to 33 (PVAEKKPAAEKKEKKP) shows a compositional bias: basic and acidic residues. One can recognise a TGS domain in the interval 72–137 (KEEPINVTLP…EADCNLQLCK (66 aa)).

This sequence belongs to the class-II aminoacyl-tRNA synthetase family.

The protein localises to the cytoplasm. The enzyme catalyses tRNA(Thr) + L-threonine + ATP = L-threonyl-tRNA(Thr) + AMP + diphosphate + H(+). This Dictyostelium discoideum (Social amoeba) protein is Probable threonine--tRNA ligase 1, cytoplasmic (thrS1).